The following is a 240-amino-acid chain: Uridylate kinase (240 aa).

ATP is bound at residue 13–16 (KASG). Residues 21–26 (GSQGFG) are involved in allosteric activation by GTP. UMP is bound at residue G55. Positions 56 and 60 each coordinate ATP. UMP contacts are provided by residues D75 and 136–143 (TGNPFFTT). 4 residues coordinate ATP: T163, Q164, Y169, and D172.

It belongs to the UMP kinase family. As to quaternary structure, homohexamer.

It is found in the cytoplasm. The catalysed reaction is UMP + ATP = UDP + ADP. Its pathway is pyrimidine metabolism; CTP biosynthesis via de novo pathway; UDP from UMP (UMPK route): step 1/1. Its activity is regulated as follows. Allosterically activated by GTP. Inhibited by UTP. In terms of biological role, catalyzes the reversible phosphorylation of UMP to UDP. The chain is Uridylate kinase from Brucella anthropi (strain ATCC 49188 / DSM 6882 / CCUG 24695 / JCM 21032 / LMG 3331 / NBRC 15819 / NCTC 12168 / Alc 37) (Ochrobactrum anthropi).